We begin with the raw amino-acid sequence, 394 residues long: Elongation factor Tu 2 (394 aa).

In terms of domain architecture, tr-type G spans 10-204 (KPHVNVGTIG…FLDSYIPEPE (195 aa)). Residues 19 to 26 (GHVDHGKT) are G1. Position 19 to 26 (19 to 26 (GHVDHGKT)) interacts with GTP. Thr26 is a binding site for Mg(2+). Residues 60–64 (GITIN) are G2. Residues 81-84 (DCPG) are G3. Residues 81–85 (DCPGH) and 136–139 (NKCD) contribute to the GTP site. The segment at 136 to 139 (NKCD) is G4. A G5 region spans residues 174–176 (SAL).

The protein belongs to the TRAFAC class translation factor GTPase superfamily. Classic translation factor GTPase family. EF-Tu/EF-1A subfamily. As to quaternary structure, monomer.

It is found in the cytoplasm. The enzyme catalyses GTP + H2O = GDP + phosphate + H(+). Functionally, GTP hydrolase that promotes the GTP-dependent binding of aminoacyl-tRNA to the A-site of ribosomes during protein biosynthesis. This Shigella flexneri serotype 5b (strain 8401) protein is Elongation factor Tu 2.